A 935-amino-acid polypeptide reads, in one-letter code: Coiled-coil domain-containing protein 66 (935 aa).

The span at 76-96 shows a compositional bias: polar residues; the sequence is LDTSQAKPENSRLTFSPSTDK. Positions 76-103 are disordered; sequence LDTSQAKPENSRLTFSPSTDKQYSEKDS. Thr-114 is modified (phosphothreonine). Ser-366 bears the Phosphoserine mark. Residues 462 to 555 are a coiled coil; it reads LEHQKAIMAQ…EQRIRELAQK (94 aa). Disordered regions lie at residues 470 to 491, 577 to 602, and 738 to 794; these read AQVE…KEEQ, TISS…DTGV, and ENLS…RTQQ. Basic and acidic residues predominate over residues 473–491; the sequence is EENRRKKRLEEEQRKKEEQ. Residues 567–935 are mediates localization to cilia, centrosomes and spindle microtubules and the interaction with PCM1, CEP290, CEP104 and CSPP1; it reads GAQVDYKAFT…NQEDNFSSSF (369 aa). The segment covering 590–602 has biased composition (polar residues); that stretch reads DTSTASPKKDTGV. Ser-595 is subject to Phosphoserine. The segment covering 752-782 has biased composition (basic and acidic residues); the sequence is SHRETESESRLHLIKKVEEPLKTPSVSKERF. Residues 783 to 794 show a composition bias toward polar residues; it reads QTSPAVKNRTQQ.

Homodimer; disulfide-linked. Interacts with CEP290. Interacts with PCM1. Interacts with ARMC9, TOGARAM1, CSPP1 and CEP104. Interacts with CDK5RAP2, CEP152, CEP192, TBG1 and PRC1. In terms of tissue distribution, widely expressed. Expressed in retina by rod photoreceptors but also detected in outer plexiform and ganglion cell layers (at protein level).

The protein resides in the cytoplasm. It localises to the cytoskeleton. Its subcellular location is the microtubule organizing center. The protein localises to the centrosome. It is found in the centriolar satellite. The protein resides in the cell projection. It localises to the cilium. Its subcellular location is the cilium basal body. The protein localises to the cilium axoneme. It is found in the photoreceptor inner segment. The protein resides in the photoreceptor outer segment. Its function is as follows. Microtubule-binding protein required for ciliogenesis. May function in ciliogenesis by mediating the transport of proteins like BBS4 to the cilium, but also through the organization of the centriolar satellites. Required for the assembly of signaling-competent cilia with proper structure and length. Mediates this function in part by regulating transition zone assembly and basal body recruitment of the IFT-B complex. Cooperates with the ciliopathy proteins CSPP1 and CEP104 during cilium length regulation. Plays two important roles during cell division. First, is required for mitotic progression via regulation of spindle assembly, organization and orientation, levels of spindle microtubules (MTs), kinetochore-fiber integrity, and chromosome alignment. Second, functions during cytokinesis in part by regulating assembly and organization of central spindle and midbody MTs. Plays a role in retina morphogenesis and/or homeostasis. This is Coiled-coil domain-containing protein 66 from Mus musculus (Mouse).